The following is a 1088-amino-acid chain: MTPAERRAFERQLQQEFPGLELHAWYRQYRSLKAAHPDAILLYRLGDFYETFDDDAKLVADLLEVTLTYKEFASQKGRDQKQRCPMAGIPYHAVEGYVARLVGAGYRVAIAEQMTETPSSRTDTRPRSIFAAGIEQTALIGGHKMVERKVVRIITPGTIIESGMLPAERNNYLAALIADHGRIGLAYADLSTGEFAAIEFSGERAAQQAQGELARLNPAEILVPDRADLRLPGLEPSSARLEQDLEFLTREERERVLPGERIARRVERENHARWAHGHVTAWSEQRWDLRNARDTLLHQFGVHSLAGFGLADRPLAIRAAGAIVQYARETQQGTVANLRAIRVYTPGDAMVLDPQTQRNLELLEGNSGTTRGSLIGVLDQTRTPMGARLLRRWISQPLCDLARLRARHDAVDHFVNDAILRASVRETLRRVGDMERVVNRIIQGSGVATPRDMARLRDALRALPDLVAALEDWTPPQEDVDLSGMSALQESAALAAAPLDGITPPDDDHTEQEPTTISLRAQREARRRVSARLTGDDLFDEEEEQENAGQPAPLPTTETVRASGESARPSFEMPSLHGHGESPTLDACADILAFLETAIDDDPPALLGASNYLRAGDNGELPRRVIRPGFEPEIDRVVAASRDAQRWISELEPKERERTGIKSLRVDYNRVFGYYIEVPKTYADQVPKHYIRKQTLTTGERYFTDELKRYEEIVEQAQQRLIDLERRAFARICETLAGAGVRLLRTARTIATIDVFAALAEAAVRGRYVRPELYDDTRLRIIGGRHPVVEQTLDETFIPNDIEMDTETRQICLITGPNMSGKSTVLRQVALIALMAQIGSFVPADAAEIGVVDRIFTRIGAQDDIATGRSTFMVEMTETAALLAQSTHRSLIILDEVGRGTSTYDGMAIAQAVIEYIHNEPRLGCRTLFATHYHELTDLERTLPRLKNYHMAATEQDGRVVFLHELRPGGADRSYGIHVAELAGIPQPVIRRATELLAELERRAPRSTPQPAPERTEERPAAGRPTARSHSAARGDPPRAPDGQLSLFDLTPGPVIEMLRRLDINQLTPLEALNKLYELQKLARIGGG.

Residues 498 to 579 (PLDGITPPDD…SFEMPSLHGH (82 aa)) form a disordered region. The span at 537–546 (DLFDEEEEQE) shows a compositional bias: acidic residues. Residue 816 to 823 (GPNMSGKS) coordinates ATP. A disordered region spans residues 1000 to 1048 (LERRAPRSTPQPAPERTEERPAAGRPTARSHSAARGDPPRAPDGQLSLF).

The protein belongs to the DNA mismatch repair MutS family.

In terms of biological role, this protein is involved in the repair of mismatches in DNA. It is possible that it carries out the mismatch recognition step. This protein has a weak ATPase activity. This is DNA mismatch repair protein MutS from Roseiflexus castenholzii (strain DSM 13941 / HLO8).